A 145-amino-acid chain; its full sequence is Internal scaffolding protein VP3 (145 aa).

The protein belongs to the microviridae B protein family.

It localises to the host cytoplasm. Participates in the assembly of the viral procapsid in the cytoplasm. Released from the procapsid upon genome packaging, possibly through affinity displacement by the protein ORF8, or by proteolysis. The protein is Internal scaffolding protein VP3 of Chlamydia phage 1 (Bacteriophage Chp1).